A 111-amino-acid chain; its full sequence is BET1-like protein (111 aa).

Residues 1-86 are Cytoplasmic-facing; sequence MADWARAQSP…MARSGQDNRK (86 aa). Residues S9 and S37 each carry the phosphoserine modification. One can recognise a t-SNARE coiled-coil homology domain in the interval 15-77; sequence EILDRENKRM…TGSVKRFSTM (63 aa). A helical; Anchor for type IV membrane protein membrane pass occupies residues 87 to 107; that stretch reads LLCGMAVGLIVAFFILSYFLS. Residues 108–111 lie on the Lumenal side of the membrane; it reads RART.

As to quaternary structure, component of a SNARE complex consisting of STX5, YKT6, GOSR1 and BET1L. Interacts with STX5.

The protein localises to the golgi apparatus membrane. Its subcellular location is the golgi apparatus. It is found in the trans-Golgi network membrane. Functionally, vesicle SNARE required for targeting and fusion of retrograde transport vesicles with the Golgi complex. Required for the integrity of the Golgi complex. The chain is BET1-like protein from Homo sapiens (Human).